The following is a 384-amino-acid chain: N-acetylneuraminate epimerase (384 aa).

Positions 1 to 29 (MGMQMKNFKKMMTLMALCLSVAITTSGYA) are cleaved as a signal peptide. Kelch repeat units lie at residues 51-95 (VIYV…VFLN), 97-149 (KLYV…VKLN), 151-184 (TMVLITGGVNEHIFDKYFIDIAAADESEKNKVIY), 185-230 (NYFN…VMEN), 233-282 (LMLI…LAGA), 304-353 (QNYT…SYGD), and 355-384 (VFLIGGENAKGKPVSSVTSFTMRDGNLLIK). Glu-239 acts as the Proton acceptor in catalysis.

The protein belongs to the NanM family. In terms of assembly, homodimer.

The protein resides in the periplasm. It carries out the reaction N-acetyl-alpha-neuraminate = N-acetyl-beta-neuraminate. Its function is as follows. Converts alpha-N-acetylneuranimic acid (Neu5Ac) to the beta-anomer, accelerating the equilibrium between the alpha- and beta-anomers. Probably facilitates sialidase-negative bacteria to compete successfully for limited amounts of extracellular Neu5Ac, which is likely taken up in the beta-anomer. In addition, the rapid removal of sialic acid from solution might be advantageous to the bacterium to damp down host responses. This Salmonella typhi protein is N-acetylneuraminate epimerase.